A 309-amino-acid polypeptide reads, in one-letter code: Epidermal retinol dehydrogenase 2 (309 aa).

The helical transmembrane segment at 11 to 31 threads the bilayer; that stretch reads LFIFLGKSLFSLLEAMIFALL. 44-68 serves as a coordination point for NADP(+); it reads LITGAGSGLGRLLALQFARLGSVLV. Position 177 (Ser-177) interacts with substrate. Catalysis depends on Tyr-190, which acts as the Proton acceptor. The helical transmembrane segment at 270–290 threads the bilayer; that stretch reads LLYFMMFLKSFLPLKTGLLIA.

It belongs to the short-chain dehydrogenases/reductases (SDR) family. In terms of tissue distribution, detected in adult lung. Detected at low levels in adult brain, heart, testis, placenta, cervix, pancreas, uterus, stomach, rectum, small intestine, colon, esophagus, thymus, skin, and skin keratinocyte. Expression is higher in psoriasis lesions relative to unaffected skin from psoriasis patients. Detected in fetal kidney, skin and lung.

The protein resides in the endoplasmic reticulum membrane. The enzyme catalyses all-trans-retinol--[retinol-binding protein] + NAD(+) = all-trans-retinal--[retinol-binding protein] + NADH + H(+). The protein operates within cofactor metabolism; retinol metabolism. Functionally, oxidoreductase with strong preference for NAD. Active in both the oxidative and reductive directions. Oxidizes all-trans-retinol in all-trans-retinaldehyde. No activity was detected with 11-cis-retinol or 11-cis-retinaldehyde as substrates with either NAD(+)/NADH or NADP(+)/NADPH. The polypeptide is Epidermal retinol dehydrogenase 2 (Homo sapiens (Human)).